Consider the following 112-residue polypeptide: MRPTATWIWHVSDAWLRRTRDFGVIRLEDFCFQFNYSQPRVGYCRVPLKAWCSNQGKFAAQFTLKSCEKPGHEKFITSFTAYGRTVQQAVSKLVEEAVDFILFRATQLERNV.

Belongs to the coronaviruses 12.7 kDa protein family.

The sequence is that of Non-structural protein of 12.7 kDa from Mus musculus (Mouse).